The sequence spans 28 residues: Caerulein precursor fragment B1 (28 aa).

This sequence belongs to the gastrin/cholecystokinin family. Expressed by the skin glands.

Its subcellular location is the secreted. In terms of biological role, peptide CPF-B1: Has antimicrobial activity against Gram-negative bacteria E.coli ATCC 25922 (MIC=5 uM) and multidrug-resistant A.baumannii (MIC=4-8 uM), against Gram-positive bacteria S.aureus ATCC 25923 (MIC=5 uM) and methicillin-resistant S.aureus and against fungus C.albicans ATCC 90028 (MIC=25 uM). Has some hemolytic activity against human erythrocytes at high concentrations. This Xenopus borealis (Kenyan clawed frog) protein is Caerulein precursor fragment B1.